The chain runs to 483 residues: V-type proton ATPase subunit H (483 aa).

Ser-483 is subject to Phosphoserine.

The protein belongs to the V-ATPase H subunit family. As to quaternary structure, V-ATPase is a heteromultimeric enzyme made up of two complexes: the ATP-hydrolytic V1 complex and the proton translocation V0 complex. The V1 complex consists of three catalytic AB heterodimers that form a heterohexamer, three peripheral stalks each consisting of EG heterodimers, one central rotor including subunits D and F, and the regulatory subunits C and H. The proton translocation complex V0 consists of the proton transport subunit a, a ring of proteolipid subunits c9c'', rotary subunit d, subunits e and f, and the accessory subunits ATP6AP1/Ac45 and ATP6AP2/PRR. Interacts with AP2M1. Interacts with TM9SF4 in colon cancer cells. In terms of assembly, (Microbial infection) Interacts with HIV-1 Nef protein. (Microbial infection) Interacts with M.tuberculosis PtpA, which blocks V-ATPase trafficking and phagosome acidification. Widely expressed.

The protein resides in the cytoplasmic vesicle. The protein localises to the clathrin-coated vesicle membrane. Its function is as follows. Subunit of the V1 complex of vacuolar(H+)-ATPase (V-ATPase), a multisubunit enzyme composed of a peripheral complex (V1) that hydrolyzes ATP and a membrane integral complex (V0) that translocates protons. V-ATPase is responsible for acidifying and maintaining the pH of intracellular compartments and in some cell types, is targeted to the plasma membrane, where it is responsible for acidifying the extracellular environment. Subunit H is essential for V-ATPase activity, but not for the assembly of the complex. Involved in the endocytosis mediated by clathrin-coated pits, required for the formation of endosomes. This chain is V-type proton ATPase subunit H (ATP6V1H), found in Homo sapiens (Human).